Consider the following 287-residue polypeptide: MSNYPKRIYVLPARHVAAPQPQRMAPKRALPTEQVVAQLLGDDMGPSGPRKRERLNHLSQEEKMDRRKLKNRVAAQNARDKKKERSAKIEDVMRDLVEENRRLRAENERLRRQNKNLMNQQNESVMYMEENNENLMNSNDACIYQNVVYEEEVVGEVAPVVVVGGEDRRAFESAAFINEPQQWEQARSTSINNNISNQLRRMDSKKNNTISVDMYLTIISILCNHMDRNKKMDTSNKSSNISRAQAESSIDSLLATLRKEQTVMQRLVQADPCTHLQKRVKHFRRIP.

In terms of domain architecture, bZIP spans 61–117 (EEKMDRRKLKNRVAAQNARDKKKERSAKIEDVMRDLVEENRRLRAENERLRRQNKNL). The segment at 63–87 (KMDRRKLKNRVAAQNARDKKKERSA) is disordered. Residues 63–88 (KMDRRKLKNRVAAQNARDKKKERSAK) form a basic motif region. Residues 78–87 (ARDKKKERSA) are compositionally biased toward basic and acidic residues. Positions 89-117 (IEDVMRDLVEENRRLRAENERLRRQNKNL) are leucine-zipper.

In terms of assembly, interacts with SUMO-conjugating enzyme ubc-9; the interaction is direct. Sumoylated. Sumoylation may negatively modulate the transcription of genes involved in the ER-stress-response.

The protein localises to the nucleus. In terms of biological role, required for transcriptional regulation of the unfolded protein response (UPR) in the endoplasmic reticulum (ER) under stressed conditions, acting downstream of ire-1, and also maintaining ER homeostasis via a negative feedback loop, in parallel with ER kinase pek-1. May also regulate Golgi protein trafficking distal to the ER. Protects the host organism from the detrimental effects of mounting an innate immune response to microbes, such as the Gram-negative bacterium P.aeruginosa, probably by modulating the UPR. Functionally, plays a role in the unconventional cytoplasmic splicing processing of its own mRNA triggered by the endoplasmic reticulum (ER) transmembrane endoribonuclease ire-1: upon ER stress, the emerging xbp-1 polypeptide chain, as part of a mRNA-ribosome-nascent chain (R-RNC) complex, cotranslationally recruits its own unprocessed mRNA through transient docking to the ER membrane and translational pausing, therefore facilitating efficient ire-1-mediated xbp-1 mRNA isoform 2 production. Its function is as follows. Functions as a stress-inducible potent transcriptional activator during endoplasmic reticulum (ER) stress by inducing unfolded protein response (UPR) target genes via binding to the UPR element (UPRE). Plays a role in modulation of the UPR, lipid metabolism, proteostasis, and lifespan. In neurons, rescues stress resistance, increases longevity, and, drives expression of lysosomal genes in the intestine and activates the UPR in distal, non-neuronal cell types through a cell-nonautonomous mechanism. In neurons or intestine, plays a role in protection against proteotoxicity, acting via positive modulation of genes involved in lysosomal function, including lipases and the fatty-acid desaturase fat-6. Protection against proteotoxicity in neurons is dependent upon the transcription factor atf-6. The protein is X-box-binding protein 1 of Caenorhabditis elegans.